Reading from the N-terminus, the 307-residue chain is Cilia-and flagella-associated protein 96 (307 aa).

2 disordered regions span residues 73–102 (YSDP…SSGE) and 218–279 (HSQK…GPKT).

This sequence belongs to the CFAP96 family.

The protein resides in the cytoplasm. It is found in the cytoskeleton. The protein localises to the microtubule organizing center. Its subcellular location is the centrosome. The protein is Cilia-and flagella-associated protein 96 (cfap96.L) of Xenopus laevis (African clawed frog).